The primary structure comprises 496 residues: Glycerol kinase (496 aa).

Residue T12 participates in ADP binding. ATP contacts are provided by T12, T13, and S14. T12 lines the sn-glycerol 3-phosphate pocket. R16 is an ADP binding site. Sn-glycerol 3-phosphate is bound by residues R82, E83, and Y134. Glycerol is bound by residues R82, E83, and Y134. Residue H230 is modified to Phosphohistidine; by HPr. D244 serves as a coordination point for sn-glycerol 3-phosphate. The glycerol site is built by D244 and Q245. ADP contacts are provided by T266 and G309. T266, G309, Q313, and G410 together coordinate ATP. The ADP site is built by G410 and N414.

It belongs to the FGGY kinase family. In terms of assembly, homotetramer and homodimer (in equilibrium). The phosphoenolpyruvate-dependent sugar phosphotransferase system (PTS), including enzyme I, and histidine-containing protein (HPr) are required for the phosphorylation, which leads to the activation of the enzyme.

It catalyses the reaction glycerol + ATP = sn-glycerol 3-phosphate + ADP + H(+). It participates in polyol metabolism; glycerol degradation via glycerol kinase pathway; sn-glycerol 3-phosphate from glycerol: step 1/1. Activated by phosphorylation and inhibited by fructose 1,6-bisphosphate (FBP). Key enzyme in the regulation of glycerol uptake and metabolism. Catalyzes the phosphorylation of glycerol to yield sn-glycerol 3-phosphate. This Bacillus subtilis (strain 168) protein is Glycerol kinase.